Consider the following 82-residue polypeptide: Host transcription reprogramming factor 10 (82 aa).

The first 19 residues, 1–19, serve as a signal peptide directing secretion; that stretch reads MQIFNMVSLVALFALGATA. Residues 57–81 form a C2H2-type zinc finger; that stretch reads WVCHACNKQFTTPAALQKHKDTVVH.

The protein localises to the secreted. It is found in the host nucleus. Functionally, probable secreted effector that translocates into the nuclei of host cells to reprogram the expression of targeted genes by binding on effector binding elements in rice. The sequence is that of Host transcription reprogramming factor 10 from Pyricularia oryzae (strain 70-15 / ATCC MYA-4617 / FGSC 8958) (Rice blast fungus).